Consider the following 387-residue polypeptide: ATP phosphoribosyltransferase regulatory subunit (387 aa).

It belongs to the class-II aminoacyl-tRNA synthetase family. HisZ subfamily. As to quaternary structure, heteromultimer composed of HisG and HisZ subunits.

Its subcellular location is the cytoplasm. Its pathway is amino-acid biosynthesis; L-histidine biosynthesis; L-histidine from 5-phospho-alpha-D-ribose 1-diphosphate: step 1/9. Required for the first step of histidine biosynthesis. May allow the feedback regulation of ATP phosphoribosyltransferase activity by histidine. The polypeptide is ATP phosphoribosyltransferase regulatory subunit (Methylobacillus flagellatus (strain ATCC 51484 / DSM 6875 / VKM B-1610 / KT)).